We begin with the raw amino-acid sequence, 402 residues long: Caspase-1 (402 aa).

Positions 1 to 91 (MADKILRAKR…YLAGILELQS (91 aa)) constitute a CARD domain. The propeptide occupies 1–118 (MADKILRAKR…PSSSETKEEQ (118 aa)). The disordered stretch occupies residues 98-125 (FVATEDSKGGHPSSSETKEEQNKEDGTF). Positions 113-123 (ETKEEQNKEDG) are enriched in basic and acidic residues. Residues His-236 and Cys-284 contribute to the active site. A propeptide spanning residues 297 to 314 (SVRDSEEDFLTDAIFEDD) is cleaved from the precursor. Ser-301 bears the Phosphoserine mark. The residue at position 343 (Arg-343) is an Omega-N-methylarginine.

The protein belongs to the peptidase C14A family. In terms of assembly, heterotetramer that consists of two anti-parallel arranged heterodimers, each one formed by a 20 kDa (Caspase-1 subunit p20) and a 10 kDa (Caspase-1 subunit p10) subunit. May be a component of the inflammasome, a protein complex which also includes PYCARD, CARD8 and NLRP2 and whose function would be the activation of pro-inflammatory caspases. Component of the AIM2 PANoptosome complex, a multiprotein complex that drives inflammatory cell death (PANoptosis). Both the p10 and p20 subunits interact with MEFV. Interacts with CARD17P/INCA and CARD18. Interacts with SERPINB1; this interaction regulates CASP1 activity. Heterotetramer that consists of two anti-parallel arranged heterodimers, each one formed by a 20 kDa (Caspase-1 subunit p20) and a 10 kDa (Caspase-1 subunit p10) subunit. In terms of processing, the two subunits are derived from the precursor sequence by an autocatalytic mechanism. Post-translationally, ubiquitinated via 'Lys-11'-linked polyubiquitination. Deubiquitinated by USP8. High level expression seen in spleen and lung, low level expression seen in brain, heart, liver, kidney, testis and skeletal muscle.

It is found in the cytoplasm. The protein resides in the cell membrane. The enzyme catalyses Strict requirement for an Asp residue at position P1 and has a preferred cleavage sequence of Tyr-Val-Ala-Asp-|-.. Functionally, thiol protease involved in a variety of inflammatory processes by proteolytically cleaving other proteins, such as the precursors of the inflammatory cytokines interleukin-1 beta (IL1B) and interleukin 18 (IL18) as well as the pyroptosis inducer Gasdermin-D (GSDMD), into active mature peptides. Plays a key role in cell immunity as an inflammatory response initiator: once activated through formation of an inflammasome complex, it initiates a pro-inflammatory response through the cleavage of the two inflammatory cytokines IL1B and IL18, releasing the mature cytokines which are involved in a variety of inflammatory processes. Cleaves a tetrapeptide after an Asp residue at position P1. Also initiates pyroptosis, a programmed lytic cell death pathway, through cleavage of GSDMD. In contrast to cleavage of interleukin IL1B, recognition and cleavage of GSDMD is not strictly dependent on the consensus cleavage site but depends on an exosite interface on CASP1 that recognizes and binds the Gasdermin-D, C-terminal (GSDMD-CT) part. Cleaves and activates CASP7 in response to bacterial infection, promoting plasma membrane repair. Upon inflammasome activation, during DNA virus infection but not RNA virus challenge, controls antiviral immunity through the cleavage of CGAS, rendering it inactive. In apoptotic cells, cleaves SPHK2 which is released from cells and remains enzymatically active extracellularly. The polypeptide is Caspase-1 (Casp1) (Mus musculus (Mouse)).